Reading from the N-terminus, the 101-residue chain is Iron-sulfur cluster assembly protein CyaY (101 aa).

This sequence belongs to the frataxin family.

Functionally, involved in iron-sulfur (Fe-S) cluster assembly. May act as a regulator of Fe-S biogenesis. This Actinobacillus pleuropneumoniae serotype 7 (strain AP76) protein is Iron-sulfur cluster assembly protein CyaY.